The primary structure comprises 176 residues: Large ribosomal subunit protein uL10 (176 aa).

The protein belongs to the universal ribosomal protein uL10 family. As to quaternary structure, part of the ribosomal stalk of the 50S ribosomal subunit. The N-terminus interacts with L11 and the large rRNA to form the base of the stalk. The C-terminus forms an elongated spine to which L12 dimers bind in a sequential fashion forming a multimeric L10(L12)X complex.

Functionally, forms part of the ribosomal stalk, playing a central role in the interaction of the ribosome with GTP-bound translation factors. The chain is Large ribosomal subunit protein uL10 from Saccharophagus degradans (strain 2-40 / ATCC 43961 / DSM 17024).